Consider the following 1684-residue polypeptide: Latrophilin Cirl (1684 aa).

The Extracellular segment spans residues 1–765 (MASNNYIQIM…LFTMFDGNMR (765 aa)). The SUEL-type lectin domain maps to 21–110 (ACEGKKLTIE…KYLEAHYQCV (90 aa)). Residues Asn138, Asn251, Asn297, and Asn336 are each glycosylated (N-linked (GlcNAc...) asparagine). Positions 181 to 300 (PPATHATPPG…GPSVSSNGSA (120 aa)) are disordered. 2 stretches are compositionally biased toward polar residues: residues 250-260 (SNATAPSNTRI) and 278-300 (KSSPNRTPGTAASGPSVSSNGSA). Residues 370 to 391 (SFDEDDEEMAGTSTTTPMSTSS) are disordered. The segment covering 381 to 391 (TSTTTPMSTSS) has biased composition (low complexity). 4 N-linked (GlcNAc...) asparagine glycosylation sites follow: Asn396, Asn653, Asn701, and Asn728. In terms of domain architecture, GAIN-B spans 559 to 752 (RSVVQKVKNI…AILMDVVDEH (194 aa)). Cystine bridges form between Cys707-Cys734 and Cys722-Cys736. A GPS region spans residues 707-752 (CVFWNYIDHAWSANGCSLESTNRTHSVCSCNHLTNFAILMDVVDEH). Residues 766 to 786 (IFIYISIAICVVFIVIALLTL) form a helical membrane-spanning segment. Over 787 to 799 (KLFNGVFVKSART) the chain is Cytoplasmic. A helical transmembrane segment spans residues 800–820 (SIYINIYICLLAIELLFLLGI). Residues 821–826 (EQTETS) lie on the Extracellular side of the membrane. Residues 827-847 (IFCGFITVFLHCAILSGTSWF) traverse the membrane as a helical segment. Topologically, residues 848–873 (CYEAFHSYSTLTSDELLLEVDQTPKV) are cytoplasmic. Residues 874-894 (NCYYLLSYGLSLSVVAISLVI) form a helical membrane-spanning segment. Residues 895-918 (NPSTYTQNDYCVLMEANAVFYATF) are Extracellular-facing. A helical membrane pass occupies residues 919–939 (VAPVLIFFMAAIGYTFLSWII). Residues 940–966 (MCRKSRTGLKTKEHTRLATVRFDIRCS) are Cytoplasmic-facing. Residues 967–987 (FVFFLLLSAVWCSAYFYLRGA) form a helical membrane-spanning segment. Over 988–994 (KMDEDVT) the chain is Extracellular. A helical membrane pass occupies residues 995 to 1015 (GIYGYNFICFNTLLGLYIFVF). At 1016-1684 (HCIQNEKIRR…VRCYLEPLAK (669 aa)) the chain is on the cytoplasmic side. The disordered stretch occupies residues 1080-1100 (PLGTNDDAHDEQQQQQHMSAT). A phosphoserine mark is found at Ser1156, Ser1247, and Ser1254. 4 disordered regions span residues 1228 to 1255 (KPNSQHGKKKRGGVGAIPASPSGSLHSR), 1270 to 1353 (KTKP…APPP), 1441 to 1520 (SRYG…LPPQ), and 1587 to 1669 (SMRG…SAML). The segment covering 1298-1314 (QQQQQLRQQRQQQQQQL) has biased composition (low complexity). Phosphoserine occurs at positions 1315 and 1316. Over residues 1328–1348 (LHLQHQQQQQQQRRAGGQQQL) the composition is skewed to low complexity. A compositionally biased stretch (polar residues) spans 1455–1466 (RNQQQQQHSLAQ). Composition is skewed to acidic residues over residues 1476 to 1489 (DEDDDEDEDDEETT) and 1499 to 1512 (CDEEEEDEESDMED). Low complexity predominate over residues 1631 to 1654 (QQLQKLSPQSTTSSSSHTSHSNPH).

This sequence belongs to the G-protein coupled receptor 2 family. LN-TM7 subfamily. In terms of assembly, forms a heterodimer, consisting of a large extracellular region non-covalently linked to a seven-transmembrane moiety. In terms of processing, proteolytically cleaved into 2 subunits, an extracellular subunit and a seven-transmembrane subunit.

The protein localises to the cell membrane. The protein is Latrophilin Cirl of Drosophila persimilis (Fruit fly).